Here is a 157-residue protein sequence, read N- to C-terminus: Large ribosomal subunit protein eL24 (157 aa).

K2 is covalently cross-linked (Glycyl lysine isopeptide (Lys-Gly) (interchain with G-Cter in SUMO2)). E4 bears the ADP-ribosyl glutamic acid mark. Position 27 is an N6-acetyllysine; alternate (K27). Residue K27 forms a Glycyl lysine isopeptide (Lys-Gly) (interchain with G-Cter in SUMO2); alternate linkage. K35 participates in a covalent cross-link: Glycyl lysine isopeptide (Lys-Gly) (interchain with G-Cter in SUMO2). N6-acetyllysine is present on K77. A Phosphothreonine modification is found at T83. The residue at position 86 (S86) is a Phosphoserine. At K93 the chain carries N6-acetyllysine. Residues 106–117 (EQAIRAAKEAKK) show a composition bias toward basic and acidic residues. The interval 106 to 157 (EQAIRAAKEAKKAKQASKKTAMAAAKAPTKAAPKQKIVKPVKVSAPRVGGKR) is disordered. A compositionally biased stretch (low complexity) spans 123 to 140 (KKTAMAAAKAPTKAAPKQ). K131 carries the post-translational modification N6-succinyllysine. A Glycyl lysine isopeptide (Lys-Gly) (interchain with G-Cter in SUMO2) cross-link involves residue K147. Phosphoserine is present on S149.

This sequence belongs to the eukaryotic ribosomal protein eL24 family. As to quaternary structure, component of the large ribosomal subunit. In terms of processing, mono-ADP-ribosylation at Glu-4 by PARP16 inhibits polysome assembly and mRNA loading, thereby inhibiting protein translation.

It localises to the cytoplasm. Functionally, component of the large ribosomal subunit. The ribosome is a large ribonucleoprotein complex responsible for the synthesis of proteins in the cell. In Bos taurus (Bovine), this protein is Large ribosomal subunit protein eL24 (RPL24).